The primary structure comprises 167 residues: Ribosome maturation factor RimM (167 aa).

The PRC barrel domain occupies 94–165 (EHEYYYSDII…TIKITPMEGL (72 aa)).

Belongs to the RimM family. Binds ribosomal protein uS19.

It is found in the cytoplasm. Its function is as follows. An accessory protein needed during the final step in the assembly of 30S ribosomal subunit, possibly for assembly of the head region. Essential for efficient processing of 16S rRNA. May be needed both before and after RbfA during the maturation of 16S rRNA. It has affinity for free ribosomal 30S subunits but not for 70S ribosomes. This is Ribosome maturation factor RimM from Staphylococcus epidermidis (strain ATCC 12228 / FDA PCI 1200).